We begin with the raw amino-acid sequence, 115 residues long: DNA-binding protein PYRAB09250 (115 aa).

Belongs to the PDCD5 family.

In Pyrococcus abyssi (strain GE5 / Orsay), this protein is DNA-binding protein PYRAB09250.